The following is a 294-amino-acid chain: Glyceraldehyde-3-phosphate dehydrogenase (294 aa).

Positions 19, 63, and 105 each coordinate NAD(+). Residues 134 to 136, Thr-165, 194 to 195, and Arg-217 each bind D-glyceraldehyde 3-phosphate; these read SCT and TG. Cys-135 (nucleophile) is an active-site residue.

This sequence belongs to the glyceraldehyde-3-phosphate dehydrogenase family. Homotetramer.

The protein localises to the cytoplasm. The catalysed reaction is D-glyceraldehyde 3-phosphate + phosphate + NAD(+) = (2R)-3-phospho-glyceroyl phosphate + NADH + H(+). It functions in the pathway carbohydrate degradation; glycolysis; pyruvate from D-glyceraldehyde 3-phosphate: step 1/5. Functionally, catalyzes the oxidative phosphorylation of glyceraldehyde 3-phosphate (G3P) to 1,3-bisphosphoglycerate (BPG) using the cofactor NAD. The first reaction step involves the formation of a hemiacetal intermediate between G3P and a cysteine residue, and this hemiacetal intermediate is then oxidized to a thioester, with concomitant reduction of NAD to NADH. The reduced NADH is then exchanged with the second NAD, and the thioester is attacked by a nucleophilic inorganic phosphate to produce BPG. The sequence is that of Glyceraldehyde-3-phosphate dehydrogenase (gap) from Atlantibacter hermannii (Escherichia hermannii).